Here is a 96-residue protein sequence, read N- to C-terminus: SPbeta prophage-derived uncharacterized protein YosV (96 aa).

This chain is SPbeta prophage-derived uncharacterized protein YosV (yosV), found in Bacillus subtilis (strain 168).